Here is a 326-residue protein sequence, read N- to C-terminus: DNA-directed RNA polymerase subunit alpha (326 aa).

Residues 1–231 are alpha N-terminal domain (alpha-NTD); the sequence is MQTNLLKPKI…DQLVVFAALE (231 aa). An alpha C-terminal domain (alpha-CTD) region spans residues 247–326; sequence VDPMLMRPVD…ESWPPANLEK (80 aa).

The protein belongs to the RNA polymerase alpha chain family. Homodimer. The RNAP catalytic core consists of 2 alpha, 1 beta, 1 beta' and 1 omega subunit. When a sigma factor is associated with the core the holoenzyme is formed, which can initiate transcription.

It carries out the reaction RNA(n) + a ribonucleoside 5'-triphosphate = RNA(n+1) + diphosphate. DNA-dependent RNA polymerase catalyzes the transcription of DNA into RNA using the four ribonucleoside triphosphates as substrates. In Polynucleobacter asymbioticus (strain DSM 18221 / CIP 109841 / QLW-P1DMWA-1) (Polynucleobacter necessarius subsp. asymbioticus), this protein is DNA-directed RNA polymerase subunit alpha.